Reading from the N-terminus, the 56-residue chain is Ovomucoid (56 aa).

Residues 6–56 (VDCSEYPKPACTLEYRPLCGSDSKTYANKCNFCNAVVESNGTLTLSHFGKC) form the Kazal-like domain. 3 cysteine pairs are disulfide-bonded: cysteine 8/cysteine 38, cysteine 16/cysteine 35, and cysteine 24/cysteine 56. Asparagine 45 is a glycosylation site (N-linked (GlcNAc...) asparagine).

It is found in the secreted. This is Ovomucoid from Oreortyx pictus (Mountain quail).